Here is a 102-residue protein sequence, read N- to C-terminus: Type IV secretion system protein PtlA homolog (102 aa).

Residues Met-1–Ala-31 form the signal peptide. The next 2 helical transmembrane spans lie at Ala-45–Trp-65 and Val-77–Ala-97.

This sequence belongs to the PtlA family.

The protein resides in the cell membrane. The chain is Type IV secretion system protein PtlA homolog (ptlA) from Bordetella bronchiseptica (strain ATCC BAA-588 / NCTC 13252 / RB50) (Alcaligenes bronchisepticus).